A 236-amino-acid chain; its full sequence is UPF0502 protein Bcenmc03_4618 (236 aa).

Belongs to the UPF0502 family.

This Burkholderia orbicola (strain MC0-3) protein is UPF0502 protein Bcenmc03_4618.